Here is a 136-residue protein sequence, read N- to C-terminus: Large-conductance mechanosensitive channel (136 aa).

2 helical membrane passes run 9 to 29 (AFASRGNVIDMAVGIIIGAAF) and 79 to 99 (IQTIIDFTIIAFAIFMGLKAI).

Belongs to the MscL family. Homopentamer.

The protein localises to the cell inner membrane. Channel that opens in response to stretch forces in the membrane lipid bilayer. May participate in the regulation of osmotic pressure changes within the cell. This chain is Large-conductance mechanosensitive channel, found in Shewanella sp. (strain ANA-3).